Consider the following 240-residue polypeptide: Proteasome subunit beta type-1 (240 aa).

Methionine 1 carries the post-translational modification N-acetylmethionine. Residues 1 to 27 constitute a propeptide that is removed on maturation; the sequence is MLSTAAYRDVERELGMGPHGSAGPVQL. O-linked (GlcNAc) serine glycosylation is present at serine 57. Residues serine 61 and serine 67 each carry the phosphoserine modification. Position 149 is a phosphotyrosine (tyrosine 149). Residue serine 161 is modified to Phosphoserine. An N6-acetyllysine modification is found at lysine 203. Residue serine 208 is glycosylated (O-linked (GlcNAc) serine).

Belongs to the peptidase T1B family. In terms of assembly, the 26S proteasome consists of a 20S proteasome core and two 19S regulatory subunits. The 20S proteasome core is a barrel-shaped complex made of 28 subunits that are arranged in four stacked rings. The two outer rings are each formed by seven alpha subunits, and the two inner rings are formed by seven beta subunits. The proteolytic activity is exerted by three beta-subunits PSMB5, PSMB6 and PSMB7. Interacts with SERPINB2. Interacts with RFPL4A. In terms of tissue distribution, detected in liver (at protein level).

It localises to the cytoplasm. Its subcellular location is the nucleus. Functionally, non-catalytic component of the 20S core proteasome complex involved in the proteolytic degradation of most intracellular proteins. This complex plays numerous essential roles within the cell by associating with different regulatory particles. Associated with two 19S regulatory particles, forms the 26S proteasome and thus participates in the ATP-dependent degradation of ubiquitinated proteins. The 26S proteasome plays a key role in the maintenance of protein homeostasis by removing misfolded or damaged proteins that could impair cellular functions, and by removing proteins whose functions are no longer required. Associated with the PA200 or PA28, the 20S proteasome mediates ubiquitin-independent protein degradation. This type of proteolysis is required in several pathways including spermatogenesis (20S-PA200 complex) or generation of a subset of MHC class I-presented antigenic peptides (20S-PA28 complex). The protein is Proteasome subunit beta type-1 (Psmb1) of Mus musculus (Mouse).